The following is a 445-amino-acid chain: Histidinol dehydrogenase (445 aa).

NAD(+)-binding residues include Y130, Q192, and N215. Positions 238, 260, and 263 each coordinate substrate. Zn(2+)-binding residues include Q260 and H263. Catalysis depends on proton acceptor residues E328 and H329. 4 residues coordinate substrate: H329, D362, E416, and H421. D362 contacts Zn(2+). H421 serves as a coordination point for Zn(2+).

It belongs to the histidinol dehydrogenase family. Requires Zn(2+) as cofactor.

It catalyses the reaction L-histidinol + 2 NAD(+) + H2O = L-histidine + 2 NADH + 3 H(+). Its pathway is amino-acid biosynthesis; L-histidine biosynthesis; L-histidine from 5-phospho-alpha-D-ribose 1-diphosphate: step 9/9. Its function is as follows. Catalyzes the sequential NAD-dependent oxidations of L-histidinol to L-histidinaldehyde and then to L-histidine. In Gloeobacter violaceus (strain ATCC 29082 / PCC 7421), this protein is Histidinol dehydrogenase.